The sequence spans 365 residues: Protein RecA (365 aa).

An ATP-binding site is contributed by Gly81–Thr88.

Belongs to the RecA family.

The protein localises to the cytoplasm. Its function is as follows. Can catalyze the hydrolysis of ATP in the presence of single-stranded DNA, the ATP-dependent uptake of single-stranded DNA by duplex DNA, and the ATP-dependent hybridization of homologous single-stranded DNAs. It interacts with LexA causing its activation and leading to its autocatalytic cleavage. The chain is Protein RecA from Borreliella afzelii (strain PKo) (Borrelia afzelii).